A 405-amino-acid polypeptide reads, in one-letter code: Homocitrate synthase AksA (405 aa).

The region spanning Ile23–Asn274 is the Pyruvate carboxyltransferase domain.

It belongs to the alpha-IPM synthase/homocitrate synthase family.

It carries out the reaction acetyl-CoA + 2-oxoglutarate + H2O = (2R)-homocitrate + CoA + H(+). The catalysed reaction is 2-oxoadipate + acetyl-CoA + H2O = (R)-dihomocitrate + CoA + H(+). It catalyses the reaction 2-oxoheptanedioate + acetyl-CoA + H2O = (R)-trihomocitrate + CoA + H(+). It participates in organic acid metabolism; 2-oxosuberate biosynthesis. In terms of biological role, catalyzes the condensation of alpha-ketoglutarate and acetyl-CoA to form (R)-homocitrate. Can also catalyze the condensation of alpha-ketoadipate with acetyl-CoA to form (R)-homo(2)citrate, and the condensation of alpha-ketopimelate with acetyl-CoA to form (R)-homo(3)citrate. These reactions are part of the biosynthesis pathway of coenzyme B and biotin. This Methanosarcina mazei (strain ATCC BAA-159 / DSM 3647 / Goe1 / Go1 / JCM 11833 / OCM 88) (Methanosarcina frisia) protein is Homocitrate synthase AksA (aksA).